A 549-amino-acid chain; its full sequence is Glucose-6-phosphate isomerase (549 aa).

Catalysis depends on E355, which acts as the Proton donor. Residues H386 and K514 contribute to the active site.

It belongs to the GPI family.

The protein resides in the cytoplasm. It catalyses the reaction alpha-D-glucose 6-phosphate = beta-D-fructose 6-phosphate. The protein operates within carbohydrate biosynthesis; gluconeogenesis. It functions in the pathway carbohydrate degradation; glycolysis; D-glyceraldehyde 3-phosphate and glycerone phosphate from D-glucose: step 2/4. In terms of biological role, catalyzes the reversible isomerization of glucose-6-phosphate to fructose-6-phosphate. This is Glucose-6-phosphate isomerase from Enterobacter sp. (strain 638).